The sequence spans 349 residues: Transcription factor HBP-1a (349 aa).

The span at 1 to 11 (MGSNDPSTPSK) shows a compositional bias: polar residues. Disordered stretches follow at residues 1–39 (MGSN…WPGF), 101–196 (FHYP…NKPM), 224–277 (GATG…QAEC), and 312–349 (NTSL…QKEP). Positions 113–124 (PAGAQGAAPGAA) are enriched in low complexity. A compositionally biased stretch (polar residues) spans 174–191 (NENGSAQNGVSHSSSHGT). The bZIP domain maps to 252-315 (ELKKQKRKLS…EELLSKNTSL (64 aa)). The tract at residues 254–273 (KKQKRKLSNRESARRSRLRK) is basic motif. Residues 261-277 (SNRESARRSRLRKQAEC) are compositionally biased toward basic and acidic residues. Residues 280 to 315 (LGQRAEALKSENSSLRIELDRIKKEYEELLSKNTSL) form a leucine-zipper region. The segment covering 334 to 349 (MNERGDTNGGSHQKEP) has biased composition (basic and acidic residues).

This sequence belongs to the bZIP family. In terms of assembly, binds DNA as a dimer.

It localises to the nucleus. Its function is as follows. Binds to the hexamer motif 5'-ACGTCA-3' of histone gene promoters. This Triticum aestivum (Wheat) protein is Transcription factor HBP-1a.